A 142-amino-acid polypeptide reads, in one-letter code: Large ribosomal subunit protein uL16 (142 aa).

It belongs to the universal ribosomal protein uL16 family. In terms of assembly, part of the 50S ribosomal subunit.

Binds 23S rRNA and is also seen to make contacts with the A and possibly P site tRNAs. This chain is Large ribosomal subunit protein uL16, found in Thermosipho africanus (strain TCF52B).